Consider the following 262-residue polypeptide: Small ribosomal subunit protein uS2 (262 aa).

The segment at 240–262 (NLDEKEESQEAESTEENTTVESN) is disordered. A compositionally biased stretch (acidic residues) spans 243 to 254 (EKEESQEAESTE).

Belongs to the universal ribosomal protein uS2 family.

In Staphylococcus haemolyticus (strain JCSC1435), this protein is Small ribosomal subunit protein uS2.